The following is a 1060-amino-acid chain: Outer capsid protein VP2 (1060 aa).

This sequence belongs to the orbivirus VP2 family.

The protein localises to the virion. Functionally, the VP2 protein is one of the two proteins (with VP5) which constitute the virus particle outer capsid. It is the major target of the host immunogenic response. The sequence is that of Outer capsid protein VP2 (Segment-2) from Camelus dromedarius (Dromedary).